We begin with the raw amino-acid sequence, 690 residues long: Eukaryotic translation initiation factor 3 subunit B (690 aa).

Over residues 1–11 (MAKKKSEEHSS) the composition is skewed to basic and acidic residues. Positions 1 to 33 (MAKKKSEEHSSADANDSDYQEEPNFDDPPNFVD) are disordered. Residues 15–25 (NDSDYQEEPNF) are compositionally biased toward acidic residues. One can recognise an RRM domain in the interval 57–141 (SVVVVDNIPK…HTFAVNLFTD (85 aa)). WD repeat units lie at residues 207–246 (TRER…KIQK), 293–331 (DGMS…LLDL), 334–369 (IKIP…TLME), 442–484 (EIRE…KPSL), and 530–575 (PDHF…IKRT). Positions 614–645 (QKDRLRLTRASKELLEKRSQLRETFMEYRNKR) form a coiled coil.

This sequence belongs to the eIF-3 subunit B family. In terms of assembly, component of the eukaryotic translation initiation factor 3 (eIF-3) complex. The eIF-3 complex interacts with pix. Interacts with mxt.

The protein resides in the cytoplasm. In terms of biological role, RNA-binding component of the eukaryotic translation initiation factor 3 (eIF-3) complex, which is involved in protein synthesis of a specialized repertoire of mRNAs and, together with other initiation factors, stimulates binding of mRNA and methionyl-tRNAi to the 40S ribosome. The eIF-3 complex specifically targets and initiates translation of a subset of mRNAs involved in cell proliferation. This chain is Eukaryotic translation initiation factor 3 subunit B, found in Drosophila willistoni (Fruit fly).